We begin with the raw amino-acid sequence, 72 residues long: UPF0270 protein PM1156 (72 aa).

It belongs to the UPF0270 family.

In Pasteurella multocida (strain Pm70), this protein is UPF0270 protein PM1156.